We begin with the raw amino-acid sequence, 150 residues long: Small ribosomal subunit protein uS19y (150 aa).

The protein belongs to the universal ribosomal protein uS19 family.

It localises to the cytoplasm. The protein is Small ribosomal subunit protein uS19y (RPS15C) of Arabidopsis thaliana (Mouse-ear cress).